The sequence spans 232 residues: Ribonuclease 3 (232 aa).

The 130-residue stretch at 5 to 134 folds into the RNase III domain; the sequence is QTVLKNHFAI…FLGALLLDKD (130 aa). E47 contacts Mg(2+). The active site involves D51. Mg(2+)-binding residues include D120 and E123. E123 is an active-site residue. In terms of domain architecture, DRBM spans 160–229; that stretch reads DYKTHLQELL…AKNAVEKGLD (70 aa).

The protein belongs to the ribonuclease III family. As to quaternary structure, homodimer. Mg(2+) serves as cofactor.

The protein localises to the cytoplasm. It carries out the reaction Endonucleolytic cleavage to 5'-phosphomonoester.. In terms of biological role, digests double-stranded RNA. Involved in the processing of primary rRNA transcript to yield the immediate precursors to the large and small rRNAs (23S and 16S). Processes some mRNAs, and tRNAs when they are encoded in the rRNA operon. Processes pre-crRNA and tracrRNA of type II CRISPR loci if present in the organism. The sequence is that of Ribonuclease 3 from Streptococcus pneumoniae serotype 4 (strain ATCC BAA-334 / TIGR4).